Consider the following 284-residue polypeptide: RNase adapter protein RapZ (284 aa).

ATP is bound at residue 8 to 15; that stretch reads GRSGSGKS. 56–59 serves as a coordination point for GTP; it reads DVRN. An RNA-binding region spans residues 266-284; the sequence is RSRGKNVQSRHRTLEKRKT.

The protein belongs to the RapZ-like family. RapZ subfamily. In terms of assembly, homotrimer.

Its function is as follows. Modulates the synthesis of GlmS, by affecting the processing and stability of the regulatory small RNA GlmZ. When glucosamine-6-phosphate (GlcN6P) concentrations are high in the cell, RapZ binds GlmZ and targets it to cleavage by RNase E. Consequently, GlmZ is inactivated and unable to activate GlmS synthesis. Under low GlcN6P concentrations, RapZ is sequestered and inactivated by an other regulatory small RNA, GlmY, preventing GlmZ degradation and leading to synthesis of GlmS. The polypeptide is RNase adapter protein RapZ (Citrobacter koseri (strain ATCC BAA-895 / CDC 4225-83 / SGSC4696)).